Reading from the N-terminus, the 276-residue chain is S-adenosylmethionine-dependent nucleotide dehydratase (276 aa).

The Radical SAM core domain maps to 6-216 (TSVRKFRSAN…RRRHEDIGCI (211 aa)). [4Fe-4S] cluster is bound by residues C22, C26, and C29.

This sequence belongs to the radical SAM superfamily. Viperin family. Requires [4Fe-4S] cluster as cofactor.

It carries out the reaction CTP + AH2 + S-adenosyl-L-methionine = 3'-deoxy-3',4'-didehydro-CTP + 5'-deoxyadenosine + L-methionine + A + H2O + H(+). Expression of pVip50 in E.coli (strain MG1655) confers resistance to phage P1; has no effect against T7. Catalyzes the conversion of cytosine triphosphate (CTP) to 3'-deoxy-3',4'-didehydro-CTP (ddhCTP), probably via a SAM-dependent radical mechanism. The modified nucleotide represses transcription from T7 RNA polymerase-directed genes (possibly by acting as chain terminators), strongly suggesting these nucleotides block viral polymerase transcription. How this protein allows bacteria to resist viruses that do not encode their own RNA polymerase (such as lambda, P1) is unknown. This is S-adenosylmethionine-dependent nucleotide dehydratase from Thermoplasmatales archaeon (strain ISO4-H5).